The primary structure comprises 448 residues: Extracellular serine protease (448 aa).

Positions 1–20 (MKLSHLSLAIISAITLAACG) are cleaved as a signal peptide. Positions 87-109 (KELENQASDDEVDPTKTGVVGNL) are disordered.

Belongs to the peptidase S17 family. It depends on a divalent metal cation as a cofactor.

Its function is as follows. This enzyme is a chymotrypsin-like serine protease. Degrades a variety of substrates present in the skin and hoof of the sheep, including elastin, keratin, fibrinogen and collagen. It seems to play an important role in the pathogenesis of sheep footrot. This is Extracellular serine protease (prvA) from Dichelobacter nodosus (Bacteroides nodosus).